Consider the following 320-residue polypeptide: 1-aminocyclopropane-1-carboxylate oxidase 3 (320 aa).

The stretch at 111–131 (NEYRLAMKDFGKRLEILAEEL) forms a coiled coil. A Fe2OG dioxygenase domain is found at 155-256 (GPTFATKLSN…RMSIASFYNP (102 aa)). Fe cation is bound by residues H180, D182, and H237. R247 contributes to the 2-oxoglutarate binding site.

The protein belongs to the iron/ascorbate-dependent oxidoreductase family. Requires Fe(2+) as cofactor.

It carries out the reaction 1-aminocyclopropane-1-carboxylate + L-ascorbate + O2 = ethene + L-dehydroascorbate + hydrogen cyanide + CO2 + 2 H2O. Its pathway is alkene biosynthesis; ethylene biosynthesis via S-adenosyl-L-methionine; ethylene from S-adenosyl-L-methionine: step 2/2. Enzyme involved in the ethylene biosynthesis. May promote stem elongation by maximizing the extensibility cells, possibly by activating ethylene biosynthesis, in response to very-long-chain fatty acids (VLCFAs C20:0 to C30:0). This is 1-aminocyclopropane-1-carboxylate oxidase 3 from Arabidopsis thaliana (Mouse-ear cress).